The chain runs to 313 residues: Pyrimidine-specific ribonucleoside hydrolase RihB (313 aa).

D11 serves as the catalytic Proton acceptor. Ca(2+)-binding residues include D11, D16, and V124. Substrate-binding residues include Q227 and H239. A Ca(2+)-binding site is contributed by D240.

The protein belongs to the IUNH family. RihB subfamily. In terms of assembly, homotetramer. It depends on Ca(2+) as a cofactor.

The enzyme catalyses a pyrimidine ribonucleoside + H2O = a pyrimidine nucleobase + D-ribose. In terms of biological role, hydrolyzes cytidine or uridine to ribose and cytosine or uracil, respectively. Has a clear preference for cytidine over uridine. Strictly specific for ribonucleosides. In Escherichia coli O1:K1 / APEC, this protein is Pyrimidine-specific ribonucleoside hydrolase RihB.